Consider the following 266-residue polypeptide: Tryptophan synthase alpha chain (266 aa).

Active-site proton acceptor residues include Glu-47 and Asp-58.

Belongs to the TrpA family. In terms of assembly, tetramer of two alpha and two beta chains.

Its subcellular location is the plastid. The protein localises to the chloroplast. It carries out the reaction (1S,2R)-1-C-(indol-3-yl)glycerol 3-phosphate + L-serine = D-glyceraldehyde 3-phosphate + L-tryptophan + H2O. The protein operates within amino-acid biosynthesis; L-tryptophan biosynthesis; L-tryptophan from chorismate: step 5/5. The alpha subunit is responsible for the aldol cleavage of indoleglycerol phosphate to indole and glyceraldehyde 3-phosphate. In Cyanidium caldarium (Red alga), this protein is Tryptophan synthase alpha chain.